The primary structure comprises 638 residues: MPLITLPDGNTIEFPNKVTGLEVAEKISKSLSKQATIISVNEELKDLSFVLDKDCSVKIFTSKDKEGLETIRHDTAHITAMAVQELFPGTQVTIGPIIENGFYYDFSRKEPFTEDDLNKIENKMKEIVDRDVPTTREVWKRDKAISHFKDKGEIYKAEIIESIPQGEDVSIYFHGDWHDLCRGPHLSSTGKIGKYFKLTKVSGAYWRGDSNNEMLQRIYGTSWASQKDLDEYLKRIEEAEKRDHRKLGKEMDLFHFREESPGSVFWHEKGWKLFQKLVAYMRARQEKAGYKEVNTPEILDRSLWEKSGHWEKYGEHMYTSQTPDEKIFAIKPMNCPGHVQVFNQGLKSYRDLPLRISEFGKVHRYEPSGALHGLLRVRAFTQDDAHIFCTEDQITSECLIVTNLILDIYKDLGFEDVILKYSDRPDLRVGDDNVWDKAEKALLDAVKASKLQYTINKGEGAFYGPKIEFVLRDAIGRDWQCGTLQVDLNLPGRLDASFVDKDGTKKIPVMLHRALFGSLERFIGILIENYAGKFPFWIAPLQVVVIPISEEFDSYAKEVNEKINNAGISSEVDLKNHNLNYKIREHSLSKIPLLLICGKKEVDSNSVTIRRLDTNKQENMELNLFLETFSALNKASSN.

In terms of domain architecture, TGS spans 1-61; sequence MPLITLPDGN…DKDCSVKIFT (61 aa). A catalytic region spans residues 243–535; it reads DHRKLGKEMD…LIENYAGKFP (293 aa). The Zn(2+) site is built by Cys-335, His-386, and His-512.

The protein belongs to the class-II aminoacyl-tRNA synthetase family. As to quaternary structure, homodimer. It depends on Zn(2+) as a cofactor.

It localises to the cytoplasm. It carries out the reaction tRNA(Thr) + L-threonine + ATP = L-threonyl-tRNA(Thr) + AMP + diphosphate + H(+). In terms of biological role, catalyzes the attachment of threonine to tRNA(Thr) in a two-step reaction: L-threonine is first activated by ATP to form Thr-AMP and then transferred to the acceptor end of tRNA(Thr). Also edits incorrectly charged L-seryl-tRNA(Thr). The protein is Threonine--tRNA ligase of Pelagibacter ubique (strain HTCC1062).